A 308-amino-acid polypeptide reads, in one-letter code: ATP synthase gamma chain (308 aa).

The protein belongs to the ATPase gamma chain family. F-type ATPases have 2 components, CF(1) - the catalytic core - and CF(0) - the membrane proton channel. CF(1) has five subunits: alpha(3), beta(3), gamma(1), delta(1), epsilon(1). CF(0) has three main subunits: a, b and c.

It localises to the cell inner membrane. Functionally, produces ATP from ADP in the presence of a proton gradient across the membrane. The gamma chain is believed to be important in regulating ATPase activity and the flow of protons through the CF(0) complex. The chain is ATP synthase gamma chain from Salinibacter ruber (strain DSM 13855 / M31).